A 591-amino-acid chain; its full sequence is L-fucose isomerase (591 aa).

Residues Glu337 and Asp361 each act as proton acceptor in the active site. Mn(2+)-binding residues include Glu337, Asp361, and His528.

It belongs to the L-fucose isomerase family. Homohexamer. Requires Mn(2+) as cofactor.

The protein localises to the cytoplasm. The catalysed reaction is L-fucose = L-fuculose. It participates in carbohydrate degradation; L-fucose degradation; L-lactaldehyde and glycerone phosphate from L-fucose: step 1/3. Functionally, converts the aldose L-fucose into the corresponding ketose L-fuculose. The chain is L-fucose isomerase from Escherichia coli (strain SE11).